The following is a 67-amino-acid chain: MPKKLKIKLVKSPIGYSWDQKDTVKRLGLKKLNQVVIKDDLPQIRGMIRKVKHLVEVEEIEEGGSNA.

Belongs to the universal ribosomal protein uL30 family. Part of the 50S ribosomal subunit.

The polypeptide is Large ribosomal subunit protein uL30 (Thermotoga maritima (strain ATCC 43589 / DSM 3109 / JCM 10099 / NBRC 100826 / MSB8)).